Reading from the N-terminus, the 215-residue chain is Ras-related protein Rab-5A (215 aa).

10 residues coordinate GTP: serine 29, alanine 30, glycine 32, lysine 33, serine 34, serine 35, histidine 46, glutamate 47, threonine 52, and glycine 78. Serine 34 is a Mg(2+) binding site. 2 short sequence motifs (switch) span residues glutamine 44–alanine 56 and alanine 77–alanine 93. Threonine 52 contributes to the Mg(2+) binding site. Position 84 is a phosphoserine (serine 84). The GTP site is built by asparagine 133, lysine 134, aspartate 136, alanine 164, and lysine 165. The segment at leucine 181–asparagine 215 is disordered. S-geranylgeranyl cysteine attachment occurs at residues cysteine 212 and cysteine 213.

This sequence belongs to the small GTPase superfamily. Rab family. As to quaternary structure, interacts with GDI1; this promotes dissociation from membranes; phosphorylation at Ser-84 disrupts this interaction. Interacts with GDI2; phosphorylation at Ser-84 disrupts the interaction. Interacts with EEA1. Interacts with RIN1 and GAPVD1, which regulate its pathway, probably by acting as a GEF. Interacts with RINL. Interacts with ALS2CL, SUN2, ZFYVE20 and RUFY1. Interacts with RABEP1; one RABEP1 homodimer binds two RAB5A chains, but at opposite sides of the dimer. Interacts with SGSM1 and SGSM3. Interacts with PIK3CB. Interacts with OCRL and INPP5F. May be a component of a complex composed of RAB5A, DYN2 and PIK3C3. Does not interact with BLOC-3 complex (heterodimer of HPS1 and HPS4). Interacts with CLN5. Interacts with APPL2. Interacts with F8A1/F8A2/F8A3. Found in a complex with F8A1/F8A2/F8A3, HTT and RAB5A; mediates the recruitment of HTT by RAB5A onto early endosomes. Interacts with ATP9A. Interacts with PPP1R21; mediates the recruitment of FERRY complex by RAB5A onto early endosomes. The cofactor is Mg(2+). Phosphorylation of Ser-84 in the switch II region by LRRK2 prevents the association of RAB regulatory proteins, including RAB GDP dissociation inhibitors GDI1 and GDI2.

Its subcellular location is the cell membrane. It is found in the early endosome membrane. The protein localises to the melanosome. It localises to the cytoplasmic vesicle. The protein resides in the cell projection. Its subcellular location is the ruffle. It is found in the membrane. The protein localises to the cytoplasm. It localises to the cytosol. The protein resides in the phagosome membrane. Its subcellular location is the endosome membrane. It carries out the reaction GTP + H2O = GDP + phosphate + H(+). Its activity is regulated as follows. Regulated by guanine nucleotide exchange factors (GEFs) including RINL, which promote the exchange of bound GDP for free GTP. Regulated by GTPase activating proteins (GAPs) which increase the GTP hydrolysis activity. Inhibited by GDP dissociation inhibitors (GDIs). Its function is as follows. The small GTPases Rab are key regulators of intracellular membrane trafficking, from the formation of transport vesicles to their fusion with membranes. Rabs cycle between an inactive GDP-bound form and an active GTP-bound form that is able to recruit to membranes different sets of downstream effectors directly responsible for vesicle formation, movement, tethering and fusion. RAB5A is required for the fusion of plasma membranes and early endosomes. Contributes to the regulation of filopodia extension. Required for the exosomal release of SDCBP, CD63, PDCD6IP and syndecan. Regulates maturation of apoptotic cell-containing phagosomes, probably downstream of DYN2 and PIK3C3. This is Ras-related protein Rab-5A from Mus musculus (Mouse).